Reading from the N-terminus, the 875-residue chain is Protein translocase subunit SecA (875 aa).

Residues Q87, 105–109 (GEGKT), and D512 each bind ATP. Zn(2+) contacts are provided by C860, C862, C871, and H872.

Belongs to the SecA family. As to quaternary structure, monomer and homodimer. Part of the essential Sec protein translocation apparatus which comprises SecA, SecYEG and auxiliary proteins SecDF-YajC and YidC. It depends on Zn(2+) as a cofactor.

The protein resides in the cell inner membrane. It localises to the cytoplasm. The catalysed reaction is ATP + H2O + cellular proteinSide 1 = ADP + phosphate + cellular proteinSide 2.. Its function is as follows. Part of the Sec protein translocase complex. Interacts with the SecYEG preprotein conducting channel. Has a central role in coupling the hydrolysis of ATP to the transfer of proteins into and across the cell membrane, serving both as a receptor for the preprotein-SecB complex and as an ATP-driven molecular motor driving the stepwise translocation of polypeptide chains across the membrane. This Buchnera aphidicola subsp. Acyrthosiphon pisum (strain APS) (Acyrthosiphon pisum symbiotic bacterium) protein is Protein translocase subunit SecA.